We begin with the raw amino-acid sequence, 102 residues long: Probable non-specific lipid-transfer protein (102 aa).

Residues 1–35 (MAMAMGMAMRKEAAVAVMMVMVVTLAAGADAGAGA) form the signal peptide. Intrachain disulfides connect Cys-37–Cys-71, Cys-45–Cys-59, Cys-60–Cys-95, and Cys-69–Cys-102.

This sequence belongs to the plant LTP family. B11E subfamily. In terms of tissue distribution, aleurone.

Functionally, potential phospholipid transfer protein. The chain is Probable non-specific lipid-transfer protein (LTP2) from Hordeum vulgare (Barley).